The chain runs to 221 residues: Zingipain-1 (221 aa).

3 disulfides stabilise this stretch: Cys24–Cys65, Cys58–Cys98, and Cys155–Cys206. The active site involves Cys27. Asn95 and Asn156 each carry an N-linked (GlcNAc...) asparagine glycan. Catalysis depends on residues His161 and Asn181.

It belongs to the peptidase C1 family.

The catalysed reaction is Preferential cleavage of peptides with a proline residue at the P2 position.. Its function is as follows. Cysteine proteinase with a high level of diversity in substrate specificity, an amino acid bearing a proline residue at the P2 position is preferred. The chain is Zingipain-1 from Zingiber officinale (Ginger).